The sequence spans 352 residues: Threonine synthase (352 aa).

Lys59 bears the N6-(pyridoxal phosphate)lysine mark. Residues Asn85, 185–189 (GNAGN), and Thr314 contribute to the pyridoxal 5'-phosphate site.

This sequence belongs to the threonine synthase family. Requires pyridoxal 5'-phosphate as cofactor.

It catalyses the reaction O-phospho-L-homoserine + H2O = L-threonine + phosphate. Its pathway is amino-acid biosynthesis; L-threonine biosynthesis; L-threonine from L-aspartate: step 5/5. Functionally, catalyzes the gamma-elimination of phosphate from L-phosphohomoserine and the beta-addition of water to produce L-threonine. The chain is Threonine synthase (thrC) from Bacillus sp. (strain ULM1).